The chain runs to 168 residues: Tyrosine-protein phosphatase (168 aa).

Positions 24-168 (FKTPLRPELF…RQNYVQDLLI (145 aa)) constitute a Tyrosine-protein phosphatase domain. The active-site Phosphocysteine intermediate is cysteine 119.

It belongs to the protein-tyrosine phosphatase family. Non-receptor class CDC14 subfamily.

It catalyses the reaction O-phospho-L-tyrosyl-[protein] + H2O = L-tyrosyl-[protein] + phosphate. Plays a role in the regulation and processing of late viral mRNAs by displaying RNA 5'-triphosphatase and diphosphatase activities. The polypeptide is Tyrosine-protein phosphatase (PTP) (Autographa californica nuclear polyhedrosis virus (AcMNPV)).